We begin with the raw amino-acid sequence, 817 residues long: Putative ATP-dependent RNA helicase R350 (817 aa).

Residues 1-29 (MNRRNRSNDLNPEPSIENPNNQIAEEFPG) are disordered. Polar residues predominate over residues 17 to 29 (ENPNNQIAEEFPG). The Helicase ATP-binding domain maps to 93-271 (LNPQGPYTSI…ALMFNLLRPG (179 aa)). Residue 106 to 113 (HGLGSGKT) coordinates ATP. Residues 206–209 (DEAH) carry the DEAH box motif. One can recognise a Helicase C-terminal domain in the interval 495-661 (LAIAFMTYIS…STDEYVEDQA (167 aa)).

It belongs to the DEAD box helicase family. DEAH subfamily.

The protein resides in the virion. The catalysed reaction is ATP + H2O = ADP + phosphate + H(+). This chain is Putative ATP-dependent RNA helicase R350, found in Acanthamoeba polyphaga mimivirus (APMV).